The primary structure comprises 615 residues: Dihydroxy-acid dehydratase (615 aa).

Asp-81 provides a ligand contact to Mg(2+). Cys-122 contacts [2Fe-2S] cluster. Mg(2+) is bound by residues Asp-123 and Lys-124. Lys-124 is modified (N6-carboxylysine). Residue Cys-193 participates in [2Fe-2S] cluster binding. Residue Glu-489 participates in Mg(2+) binding. The active-site Proton acceptor is Ser-515.

Belongs to the IlvD/Edd family. As to quaternary structure, homodimer. [2Fe-2S] cluster is required as a cofactor. It depends on Mg(2+) as a cofactor.

It carries out the reaction (2R)-2,3-dihydroxy-3-methylbutanoate = 3-methyl-2-oxobutanoate + H2O. The enzyme catalyses (2R,3R)-2,3-dihydroxy-3-methylpentanoate = (S)-3-methyl-2-oxopentanoate + H2O. It functions in the pathway amino-acid biosynthesis; L-isoleucine biosynthesis; L-isoleucine from 2-oxobutanoate: step 3/4. The protein operates within amino-acid biosynthesis; L-valine biosynthesis; L-valine from pyruvate: step 3/4. Its function is as follows. Functions in the biosynthesis of branched-chain amino acids. Catalyzes the dehydration of (2R,3R)-2,3-dihydroxy-3-methylpentanoate (2,3-dihydroxy-3-methylvalerate) into 2-oxo-3-methylpentanoate (2-oxo-3-methylvalerate) and of (2R)-2,3-dihydroxy-3-methylbutanoate (2,3-dihydroxyisovalerate) into 2-oxo-3-methylbutanoate (2-oxoisovalerate), the penultimate precursor to L-isoleucine and L-valine, respectively. The chain is Dihydroxy-acid dehydratase from Pseudomonas syringae pv. syringae (strain B728a).